The sequence spans 81 residues: Photosystem I iron-sulfur center (81 aa).

2 4Fe-4S ferredoxin-type domains span residues 2–31 and 39–68; these read SHSV…MIPW and IASA…VRVY. [4Fe-4S] cluster is bound by residues Cys11, Cys14, Cys17, Cys21, Cys48, Cys51, Cys54, and Cys58.

As to quaternary structure, the eukaryotic PSI reaction center is composed of at least 11 subunits. [4Fe-4S] cluster serves as cofactor.

It is found in the plastid. The protein localises to the chloroplast thylakoid membrane. The enzyme catalyses reduced [plastocyanin] + hnu + oxidized [2Fe-2S]-[ferredoxin] = oxidized [plastocyanin] + reduced [2Fe-2S]-[ferredoxin]. In terms of biological role, apoprotein for the two 4Fe-4S centers FA and FB of photosystem I (PSI); essential for photochemical activity. FB is the terminal electron acceptor of PSI, donating electrons to ferredoxin. The C-terminus interacts with PsaA/B/D and helps assemble the protein into the PSI complex. Required for binding of PsaD and PsaE to PSI. PSI is a plastocyanin-ferredoxin oxidoreductase, converting photonic excitation into a charge separation, which transfers an electron from the donor P700 chlorophyll pair to the spectroscopically characterized acceptors A0, A1, FX, FA and FB in turn. In Zea mays (Maize), this protein is Photosystem I iron-sulfur center.